Consider the following 180-residue polypeptide: MDLKSNIKLILATDLLAVLILSLFIKNFKMVLAFLLAVFVIWLFIDKNNINERLYENLLAMSVGFIEGILIFLGIIYNEVFLDITLGIFAILILIVMGILFPKYKLIFEVFDEFVEHLKQKSGFLTLISIFGMLLTIYVFLLILPSKEFCINAVDIIRTIMLVITANMFIIEFYTFKKFS.

6 helical membrane passes run 4-24, 25-45, 57-77, 81-101, 124-144, and 156-176; these read KSNI…LSLF, IKNF…WLFI, NLLA…GIIY, FLDI…GILF, FLTL…LLIL, and IIRT…FYTF.

The protein localises to the cell membrane. This is an uncharacterized protein from Methanocaldococcus jannaschii (strain ATCC 43067 / DSM 2661 / JAL-1 / JCM 10045 / NBRC 100440) (Methanococcus jannaschii).